The sequence spans 493 residues: MDSSDSKAATDEEIRRALKAADLMKILDGKIALGNKSGTKNLGEHKFWKTQPVPQITGSGAPAPIEEGPIDDPKTPADVRQEPGVLPAGFEWSTIDINDEEQSKEVYVLLCENYVEDDDAMFRFNYSREFLLWALTAPGYLPDWHIGVRVQKTKKLVAFISGIKIDIRVRAKTFPAAEINFLCVHKKLRSKRLAPVLIKEVTRRVNLTNIWQAIYTAGVILPTPIGTCRYFHRNLNPPKLVDIGFSPLPRGSTIARLVQQYSVPSHPRIPGFREMKKEDVPQVGALLRRYLDRFDVAQAFRDDDEVEHWLLSGQGKEVGGRRVEQVVWAYVVEDPTTHRITDLISFYALPSTIMKHPKHNLLNAAYMFYYATDVVFPPSSSSANSDVDVDANAGESSVAAVGTGGEDAKTKKKLETRLNALTADILIIAKQAGFDVFNALTLLDNNMFLQEQKFGPGDGYLNYYLYNWNCAPIDGGHHSTTAKQGSKIGVVML.

45-48 (HKFW) is a binding site for tetradecanoyl-CoA. A disordered region spans residues 53-73 (VPQITGSGAPAPIEEGPIDDP). Tetradecanoyl-CoA-binding positions include 182-184 (LCV) and 190-194 (SKRLA). Residue L493 is the Proton acceptor; via carboxylate of the active site.

This sequence belongs to the NMT family. In terms of assembly, monomer.

It is found in the cytoplasm. The enzyme catalyses N-terminal glycyl-[protein] + tetradecanoyl-CoA = N-tetradecanoylglycyl-[protein] + CoA + H(+). In terms of biological role, adds a myristoyl group to the N-terminal glycine residue of certain cellular proteins. In Cryptococcus neoformans var. neoformans serotype D (strain B-3501A) (Filobasidiella neoformans), this protein is Glycylpeptide N-tetradecanoyltransferase.